A 533-amino-acid polypeptide reads, in one-letter code: Protein mono-ADP-ribosyltransferase PARP3 (533 aa).

The segment at 1–30 (MAPKPKPWVQTEGPEKKKGRQAGREEDPFR) is disordered. An N6-(ADP-ribosyl)lysine modification is found at lysine 6. ADP-ribosyl glutamic acid is present on residues glutamate 12, glutamate 15, glutamate 26, and glutamate 34. The Nuclear localization signal signature appears at 14–20 (PEKKKGR). N6-(ADP-ribosyl)lysine is present on lysine 37. One can recognise a WGR domain in the interval 59 to 150 (GTQVYEDYNC…DHFVSHPGKY (92 aa)). Aspartate 141 carries the post-translational modification ADP-ribosyl aspartic acid. Position 163 is an ADP-ribosyl glutamic acid (glutamate 163). The region spanning 182-300 (PCSLDPATQK…DIELAQALQA (119 aa)) is the PARP alpha-helical domain. Residue aspartate 210 is modified to ADP-ribosyl aspartic acid. An ADP-ribosyl glutamic acid mark is found at glutamate 231, glutamate 309, glutamate 310, glutamate 344, and glutamate 449. Positions 313–533 (HPLDRDYQLL…RLRYLLEVHL (221 aa)) constitute a PARP catalytic domain. Positions 454-482 (TDNPSLKSPPPGFDSVIARGHTEPDPTQD) are disordered.

The protein belongs to the ARTD/PARP family. Interacts with PARP1; leading to activate PARP1 in absence of DNA. Interacts with PRKDC. Interacts with XRCC5/Ku80; the interaction is dependent on nucleic acids. Interacts with XRCC6/Ku70; the interaction is dependent on nucleic acids. Interacts with EZH2, HDAC1, HDAC2, SUZ12, YY1, LRIG3 and LIG4. Post-translationally, auto-mono-ADP-ribosylated. As to expression, widely expressed; the highest levels are in the kidney, skeletal muscle, liver, heart and spleen; also detected in pancreas, lung, placenta, brain, leukocytes, colon, small intestine, ovary, testis, prostate and thymus.

It is found in the nucleus. It localises to the chromosome. Its subcellular location is the cytoplasm. The protein resides in the cytoskeleton. The protein localises to the microtubule organizing center. It is found in the centrosome. It localises to the centriole. The enzyme catalyses L-aspartyl-[protein] + NAD(+) = 4-O-(ADP-D-ribosyl)-L-aspartyl-[protein] + nicotinamide. The catalysed reaction is L-glutamyl-[protein] + NAD(+) = 5-O-(ADP-D-ribosyl)-L-glutamyl-[protein] + nicotinamide. It carries out the reaction L-lysyl-[protein] + NAD(+) = N(6)-(ADP-D-ribosyl)-L-lysyl-[protein] + nicotinamide + H(+). Its activity is regulated as follows. Mono-ADP-ribosyltransferase activity of PARP3 is selectively inhibited by ME0328 compound; ME0328 does not inhibit other ARTD/PARP enzymes, such as PARP1. Mono-ADP-ribosyltransferase is strongly inhibited by KU0058948 compound. Mono-ADP-ribosyltransferase that mediates mono-ADP-ribosylation of target proteins and plays a key role in the response to DNA damage. Mediates mono-ADP-ribosylation of glutamate, aspartate or lysine residues on target proteins. In contrast to PARP1 and PARP2, it is not able to mediate poly-ADP-ribosylation. Involved in DNA repair by mediating mono-ADP-ribosylation of a limited number of acceptor proteins involved in chromatin architecture and in DNA metabolism, such as histone H2B, XRCC5 and XRCC6. ADP-ribosylation follows DNA damage and appears as an obligatory step in a detection/signaling pathway leading to the reparation of DNA strand breaks. Involved in single-strand break repair by catalyzing mono-ADP-ribosylation of histone H2B on 'Glu-2' (H2BE2ADPr) of nucleosomes containing nicked DNA. Cooperates with the XRCC5-XRCC6 (Ku80-Ku70) heterodimer to limit end-resection thereby promoting accurate NHEJ. Suppresses G-quadruplex (G4) structures in response to DNA damage. Associates with a number of DNA repair factors and is involved in the response to exogenous and endogenous DNA strand breaks. Together with APLF, promotes the retention of the LIG4-XRCC4 complex on chromatin and accelerate DNA ligation during non-homologous end-joining (NHEJ). May link the DNA damage surveillance network to the mitotic fidelity checkpoint. Acts as a negative regulator of immunoglobulin class switch recombination, probably by controlling the level of AICDA /AID on the chromatin. In addition to proteins, also able to ADP-ribosylate DNA: mediates DNA mono-ADP-ribosylation of DNA strand break termini via covalent addition of a single ADP-ribose moiety to a 5'- or 3'-terminal phosphate residues in DNA containing multiple strand breaks. This chain is Protein mono-ADP-ribosyltransferase PARP3, found in Homo sapiens (Human).